Reading from the N-terminus, the 249-residue chain is uncharacterized protein (249 aa).

6 residues coordinate a divalent metal cation: H10, H12, E95, H129, H150, and D198.

The protein belongs to the metallo-dependent hydrolases superfamily. TatD-type hydrolase family. It depends on a divalent metal cation as a cofactor.

This is an uncharacterized protein from Methanocaldococcus jannaschii (strain ATCC 43067 / DSM 2661 / JAL-1 / JCM 10045 / NBRC 100440) (Methanococcus jannaschii).